The primary structure comprises 53 residues: ATP synthase F(0) complex subunit 8 (53 aa).

Residues 8-24 traverse the membrane as a helical segment; it reads PWLTTFLIVWISLIVIL.

The protein belongs to the ATPase protein 8 family. In terms of assembly, component of the ATP synthase complex composed at least of ATP5F1A/subunit alpha, ATP5F1B/subunit beta, ATP5MC1/subunit c (homooctomer), MT-ATP6/subunit a, MT-ATP8/subunit 8, ATP5ME/subunit e, ATP5MF/subunit f, ATP5MG/subunit g, ATP5MK/subunit k, ATP5MJ/subunit j, ATP5F1C/subunit gamma, ATP5F1D/subunit delta, ATP5F1E/subunit epsilon, ATP5PF/subunit F6, ATP5PB/subunit b, ATP5PD/subunit d, ATP5PO/subunit OSCP. ATP synthase complex consists of a soluble F(1) head domain (subunits alpha(3) and beta(3)) - the catalytic core - and a membrane F(0) domain - the membrane proton channel (subunits c, a, 8, e, f, g, k and j). These two domains are linked by a central stalk (subunits gamma, delta, and epsilon) rotating inside the F1 region and a stationary peripheral stalk (subunits F6, b, d, and OSCP).

The protein localises to the mitochondrion membrane. Functionally, subunit 8, of the mitochondrial membrane ATP synthase complex (F(1)F(0) ATP synthase or Complex V) that produces ATP from ADP in the presence of a proton gradient across the membrane which is generated by electron transport complexes of the respiratory chain. ATP synthase complex consist of a soluble F(1) head domain - the catalytic core - and a membrane F(1) domain - the membrane proton channel. These two domains are linked by a central stalk rotating inside the F(1) region and a stationary peripheral stalk. During catalysis, ATP synthesis in the catalytic domain of F(1) is coupled via a rotary mechanism of the central stalk subunits to proton translocation. In vivo, can only synthesize ATP although its ATP hydrolase activity can be activated artificially in vitro. Part of the complex F(0) domain. This is ATP synthase F(0) complex subunit 8 from Alligator mississippiensis (American alligator).